Consider the following 429-residue polypeptide: Methylenetetrahydrofolate--tRNA-(uracil-5-)-methyltransferase TrmFO (429 aa).

7–12 (GAGLAG) provides a ligand contact to FAD.

This sequence belongs to the MnmG family. TrmFO subfamily. The cofactor is FAD.

The protein localises to the cytoplasm. It carries out the reaction uridine(54) in tRNA + (6R)-5,10-methylene-5,6,7,8-tetrahydrofolate + NADH + H(+) = 5-methyluridine(54) in tRNA + (6S)-5,6,7,8-tetrahydrofolate + NAD(+). The enzyme catalyses uridine(54) in tRNA + (6R)-5,10-methylene-5,6,7,8-tetrahydrofolate + NADPH + H(+) = 5-methyluridine(54) in tRNA + (6S)-5,6,7,8-tetrahydrofolate + NADP(+). In terms of biological role, catalyzes the folate-dependent formation of 5-methyl-uridine at position 54 (M-5-U54) in all tRNAs. The sequence is that of Methylenetetrahydrofolate--tRNA-(uracil-5-)-methyltransferase TrmFO from Thermosipho melanesiensis (strain DSM 12029 / CIP 104789 / BI429).